The chain runs to 887 residues: Leucine--tRNA ligase (887 aa).

The 'HIGH' region motif lies at 48–58 (PYPSGKLHMGH). The 'KMSKS' region signature appears at 644 to 648 (TMSKS). Residue Lys-647 coordinates ATP.

The protein belongs to the class-I aminoacyl-tRNA synthetase family.

It localises to the cytoplasm. It catalyses the reaction tRNA(Leu) + L-leucine + ATP = L-leucyl-tRNA(Leu) + AMP + diphosphate. This Leptothrix cholodnii (strain ATCC 51168 / LMG 8142 / SP-6) (Leptothrix discophora (strain SP-6)) protein is Leucine--tRNA ligase.